The primary structure comprises 167 residues: uncharacterized protein (167 aa).

The next 4 helical transmembrane spans lie at 13-33 (LIYLFIWGLIISGLSDLTWLI), 37-57 (VLAVSLFFISLQFSQKSFLPY), 61-81 (WFALVIFIVLMWATLSWKIGE), and 103-123 (LLLISLWLFLWNINDAVLVPS).

It is found in the cell membrane. This is an uncharacterized protein from Haemophilus influenzae (strain ATCC 51907 / DSM 11121 / KW20 / Rd).